The primary structure comprises 207 residues: Ras-related protein Rab-8A (207 aa).

Serine 17, glycine 18, valine 19, glycine 20, lysine 21, threonine 22, cysteine 23, serine 35, serine 39, and threonine 40 together coordinate GTP. Threonine 22 serves as a coordination point for Mg(2+). 2 short sequence motifs (switch) span residues 31 to 45 (DAFN…GIDF) and 63 to 80 (DTAG…YYRG). Mg(2+) is bound by residues threonine 40 and aspartate 63. Glycine 66 contributes to the GTP binding site. A Phosphothreonine modification is found at threonine 72. Positions 121, 122, 124, 152, and 153 each coordinate GTP. Phosphoserine is present on residues serine 181 and serine 185. Cysteine methyl ester is present on cysteine 204. Cysteine 204 carries the S-geranylgeranyl cysteine lipid modification. A propeptide spans 205–207 (VLL) (removed in mature form).

This sequence belongs to the small GTPase superfamily. Rab family. In terms of assembly, interacts (GTP-bound form) with MICALL1; regulates RAB8A association with recycling endosomes. Interacts with MICALL2; competes with RAB13 and is involved in E-cadherin endocytic recycling. Interacts (GTP-bound form) with MICAL1, MICALCL, MICAL3, EHBP1 and EHBP1L1; at least in case of MICAL1, MICALCL, MICAL3 and EHBP1L1 two molecules of RAB8A can bind to one molecule of the effector protein; ternary complexes of RAB8A, RAB13 and either MICAL1 or EHBP1L1 are possible. Interacts with EHD1. Interacts with MAP4K2 and SYTL4. Interacts with SGSM1 and SGSM3. Interacts with RABIF, RIMS2, RPH3A and RPH3A. Interacts with OPTN. Interacts with RAB3IP, RAB3IP functions as guanine exchange factor (GEF). Interacts with MYO5B. Interacts with CIMAP3. Interacts with BIRC6/bruce. Interacts with OCRL. Interacts with AHI1. Interacts with DCDC1. Interacts with LRRK2; interaction facilitates phosphorylation of Thr-72. Interacts with RAB31P, GDI1, GDI2, CHM, CHML, RABGGTA, RABGGTB, TBC1D15 and INPP5B; these interactions are dependent on Thr-72 not being phosphorylated. Interacts with RILPL1 and RILPL2; these interactions are dependent on the phosphorylation of Thr-72 by LRRK2. Interacts with DZIP1; prevents inhibition by the GDP-dissociation inhibitor GDI2. Interacts (in GDP-bound form) with RAB3IP/Rabin8, RAB3IP functions as guanine exchange factor (GEF) towards RAB8A. Interacts (in GDP-bound form) with RPGR, RPGR functions as GEF towards RAB8A. Requires Mg(2+) as cofactor. Phosphorylation of Thr-72 in the switch II region by LRRK2 prevents the association of RAB regulatory proteins, including CHM, CHML and RAB GDP dissociation inhibitors GDI1 and GDI2. Phosphorylation by LRRK2 is required for localization to stressed lysosomes.

Its subcellular location is the cell membrane. The protein resides in the golgi apparatus. The protein localises to the endosome membrane. It localises to the recycling endosome membrane. It is found in the cell projection. Its subcellular location is the cilium. The protein resides in the cytoplasmic vesicle. The protein localises to the phagosome membrane. It localises to the cytoplasm. It is found in the cytoskeleton. Its subcellular location is the microtubule organizing center. The protein resides in the centrosome. The protein localises to the centriole. It localises to the cilium basal body. It is found in the midbody. Its subcellular location is the lysosome. It carries out the reaction GTP + H2O = GDP + phosphate + H(+). Regulated by guanine nucleotide exchange factors (GEFs) such as RAB3IP/Rabin8 and RPGR which promote the exchange of bound GDP for free GTP, GTPase activating proteins (GAPs) which increase the GTP hydrolysis activity, and GDP dissociation inhibitors (GDIs) which inhibit the dissociation of the nucleotide from the GTPase. Activated in response to insulin. Functionally, the small GTPases Rab are key regulators of intracellular membrane trafficking, from the formation of transport vesicles to their fusion with membranes. Rabs cycle between an inactive GDP-bound form and an active GTP-bound form that is able to recruit to membranes different sets of downstream effectors directly responsible for vesicle formation, movement, tethering and fusion. RAB8A is involved in polarized vesicular trafficking and neurotransmitter release. Together with RAB11A, RAB3IP, the exocyst complex, PARD3, PRKCI, ANXA2, CDC42 and DNMBP promotes transcytosis of PODXL to the apical membrane initiation sites (AMIS), apical surface formation and lumenogenesis. Regulates the compacted morphology of the Golgi. Together with MYO5B and RAB11A participates in epithelial cell polarization. Also involved in membrane trafficking to the cilium and ciliogenesis. Together with MICALL2, may also regulate adherens junction assembly. May play a role in insulin-induced transport to the plasma membrane of the glucose transporter GLUT4 and therefore play a role in glucose homeostasis. Involved in autophagy. Participates in the export of a subset of neosynthesized proteins through a Rab8-Rab10-Rab11-dependent endososomal export route. Targeted to and stabilized on stressed lysosomes through LRRK2 phosphorylation. Suppresses stress-induced lysosomal enlargement through EHBP1 and EHNP1L1 effector proteins. The polypeptide is Ras-related protein Rab-8A (RAB8A) (Bos taurus (Bovine)).